We begin with the raw amino-acid sequence, 185 residues long: Ribosome-recycling factor (185 aa).

Positions 138–159 (KVKKLEKDKEISEDESKKAQEQ) are disordered.

The protein belongs to the RRF family.

It localises to the cytoplasm. In terms of biological role, responsible for the release of ribosomes from messenger RNA at the termination of protein biosynthesis. May increase the efficiency of translation by recycling ribosomes from one round of translation to another. The sequence is that of Ribosome-recycling factor from Helicobacter acinonychis (strain Sheeba).